We begin with the raw amino-acid sequence, 343 residues long: ATP-dependent (S)-NAD(P)H-hydrate dehydratase (343 aa).

Residues 1 to 42 (MAVCPYGAAAVVMALLSAAIAFHCSPLLAVLQRALSLHTAHA) constitute a mitochondrion transit peptide. Residues 49–340 (LFQLVRNIVP…AEVGAAFSKL (292 aa)) form the YjeF C-terminal domain. K63 bears the N6-acetyllysine mark. Y81 carries the phosphotyrosine modification. (6S)-NADPHX is bound by residues G149 and 202–208 (NHVEFSR). Residues 242-246 (KGEQD) and 261-270 (GSSRRCGGQG) each bind ATP. Residue D271 coordinates (6S)-NADPHX.

It belongs to the NnrD/CARKD family. It depends on Mg(2+) as a cofactor.

It is found in the mitochondrion. It carries out the reaction (6S)-NADHX + ATP = ADP + phosphate + NADH + H(+). It catalyses the reaction (6S)-NADPHX + ATP = ADP + phosphate + NADPH + H(+). In terms of biological role, catalyzes the dehydration of the S-form of NAD(P)HX at the expense of ATP, which is converted to ADP. Together with NAD(P)HX epimerase, which catalyzes the epimerization of the S- and R-forms, the enzyme allows the repair of both epimers of NAD(P)HX, a damaged form of NAD(P)H that is a result of enzymatic or heat-dependent hydration. The polypeptide is ATP-dependent (S)-NAD(P)H-hydrate dehydratase (Rattus norvegicus (Rat)).